The chain runs to 470 residues: TNF receptor-associated factor 4 (470 aa).

The RING-type zinc-finger motif lies at 18-58 (CPLCGKPMREPVQVSTCGHRFCDTCLQEFLSEGVFKCPEDQ). TRAF-type zinc fingers lie at residues 101–154 (GHLN…EAYE), 155–208 (SHEG…DTIQ), and 209–267 (SHQY…LAMG). Residue Lys-263 forms a Glycyl lysine isopeptide (Lys-Gly) (interchain with G-Cter in ubiquitin) linkage. A coiled-coil region spans residues 277-310 (HLAMMCALVSRQRQELQELRRELEELSIGSDGVL). Positions 307–462 (DGVLIWKIGS…DDAVFIRASV (156 aa)) constitute an MATH domain. A Phosphoserine modification is found at Ser-426.

The protein belongs to the TNF receptor-associated factor family. B subfamily. In terms of assembly, homotrimer. Interacts with LTBR/TNFRSF3, NGFR/TNFRSF16, RPS6KB1 and TGFB1I1. Interacts with SMURF1. Interacts (via TRAF domain) with MAP3K4 (via kinase domain). Interacts with NCF1, TICAM1, IRAK1 and TRAF6, and is probably part of a complex containing TRAF4, NCF1, TICAM1, IRAK1 and TRAF6. Interacts (via MATH domain) with GP6 and GP1BB. Interacts with EGFR (via C-terminal region); this interaction promotes the formation of EGFR asymmetric dimers. Interacts with PKM; this interaction promotes PKM kinase activity. In terms of processing, polyubiquitinated, leading to its proteasomal degradation. Ubiquitinated at Lys-263 by the SCF(FBXL2) complex, leading to its degradation by the proteasome. In terms of tissue distribution, predominantly expressed in brain. Preferentially expressed by postmitotic undifferentiated neurons in developing central (CNS) and peripheral (PNS) nervous system, and in nervous tissues of sensory organs. In the embryo, protein expression was shown in brain, thymus, salivary glands and intestine. In the adult, protein expression is restricted to the brain (hippocampus and olfactory bulb).

The protein localises to the cytoplasm. It is found in the nucleus. The protein resides in the perinuclear region. Its subcellular location is the cell junction. It localises to the tight junction. The protein localises to the cell membrane. It is found in the cytoskeleton. The enzyme catalyses S-ubiquitinyl-[E2 ubiquitin-conjugating enzyme]-L-cysteine + [acceptor protein]-L-lysine = [E2 ubiquitin-conjugating enzyme]-L-cysteine + N(6)-ubiquitinyl-[acceptor protein]-L-lysine.. The protein operates within protein degradation; proteasomal ubiquitin-dependent pathway. Adapter protein with E3 ligase activity that is involved in many diverse biological processes including cell proliferation, migration, differentiation, DNA repair, platelet activation or apoptosis. Promotes EGFR-mediated signaling by facilitating the dimerization of EGFR and downstream AKT activation thereby promoting cell proliferation. Ubiquitinates SMURF2 through 'Lys-48'-linked ubiquitin chain leading to SMURF2 degradation through the proteasome and subsequently osteogenic differentiation. Promotes 'Lys-63'-mediated ubiquitination of CHK1 which in turn activates cell cycle arrest and activation of DNA repair. In addition, promotes an atypical 'Lys-29'-linked ubiquitination at the C-terminal end of IRS1 which is crucial for insulin-like growth factor (IGF) signal transduction. Regulates activation of NF-kappa-B in response to signaling through Toll-like receptors. Required for normal skeleton development, and for normal development of the respiratory tract. Required for activation of RPS6KB1 in response to TNF signaling. Modulates TRAF6 functions. Inhibits adipogenic differentiation by activating pyruvate kinase PKM activity and subsequently the beta-catenin signaling pathway. This chain is TNF receptor-associated factor 4 (Traf4), found in Mus musculus (Mouse).